A 431-amino-acid chain; its full sequence is Alpha-gurjunene synthase (431 aa).

The Mg(2+) site is built by Asp-126 and Asp-130. Arg-267 is a binding site for (2E,6E)-farnesyl diphosphate. Mg(2+)-binding residues include Asn-321 and Ser-325. Lys-328 is a binding site for (2E,6E)-farnesyl diphosphate. Position 329 (Glu-329) interacts with Mg(2+). A (2E,6E)-farnesyl diphosphate-binding site is contributed by Arg-412–Tyr-413.

Belongs to the terpene synthase family. Mg(2+) serves as cofactor.

The enzyme catalyses (2E,6E)-farnesyl diphosphate = (-)-alpha-gurjunene + diphosphate. It carries out the reaction (2E,6E)-farnesyl diphosphate + H2O = 5-hydroxy-alpha-gurjunene + diphosphate. Its pathway is secondary metabolite biosynthesis; terpenoid biosynthesis. Its function is as follows. Catalyzes the conversion of (2E,6E)-farnesyl diphosphate (FPP) into the sesquiterpene alcohols (-)-alpha-gurjunene and 5-hydroxy-alpha-gurjunene. Other unidentified sesquiterpene alcohols found to be catalyzed by MTPSL4 may arise from carbocation reaction intermediates along the catalytic cascade to gurjunene being quenched by a water molecule, yielding formation of the alcohols. In Marchantia polymorpha (Common liverwort), this protein is Alpha-gurjunene synthase.